The chain runs to 652 residues: Carboxypeptidase S1 homolog A (652 aa).

Positions 1 to 19 are cleaved as a signal peptide; sequence MRLAASIAVALPVIGAASA. Cysteines 50 and 121 form a disulfide. 6 N-linked (GlcNAc...) asparagine glycosylation sites follow: Asn-77, Asn-132, Asn-161, Asn-168, Asn-184, and Asn-202. Residue Ser-238 is part of the active site. 4 N-linked (GlcNAc...) asparagine glycosylation sites follow: Asn-260, Asn-299, Asn-347, and Asn-410. Cystine bridges form between Cys-325–Cys-361 and Cys-332–Cys-354. Asp-458 is an active-site residue. Residue Cys-461 coordinates substrate. Asn-474, Asn-492, and Asn-505 each carry an N-linked (GlcNAc...) asparagine glycan. Residue His-516 is part of the active site. Glu-517 is a binding site for substrate. Asn-594 is a glycosylation site (N-linked (GlcNAc...) asparagine). Residues 608 to 628 are disordered; that stretch reads AASKGNPPPTTTSSPTASPTA. Over residues 618-628 the composition is skewed to low complexity; sequence TTSSPTASPTA. Residue Gly-629 is the site of GPI-anchor amidated glycine attachment. The propeptide at 630 to 652 is removed in mature form; that stretch reads SAMLKAPVAMLAISALTVLAFYL.

This sequence belongs to the peptidase S10 family.

It is found in the cell membrane. The catalysed reaction is Preferential release of a C-terminal arginine or lysine residue.. Its function is as follows. Extracellular serine carboxypeptidase that contributes to pathogenicity. The polypeptide is Carboxypeptidase S1 homolog A (SCPA) (Arthroderma benhamiae (strain ATCC MYA-4681 / CBS 112371) (Trichophyton mentagrophytes)).